Consider the following 199-residue polypeptide: ATP-dependent Clp protease proteolytic subunit (199 aa).

Ser-99 serves as the catalytic Nucleophile. His-124 is a catalytic residue.

This sequence belongs to the peptidase S14 family. Fourteen ClpP subunits assemble into 2 heptameric rings which stack back to back to give a disk-like structure with a central cavity, resembling the structure of eukaryotic proteasomes.

Its subcellular location is the cytoplasm. The catalysed reaction is Hydrolysis of proteins to small peptides in the presence of ATP and magnesium. alpha-casein is the usual test substrate. In the absence of ATP, only oligopeptides shorter than five residues are hydrolyzed (such as succinyl-Leu-Tyr-|-NHMec, and Leu-Tyr-Leu-|-Tyr-Trp, in which cleavage of the -Tyr-|-Leu- and -Tyr-|-Trp bonds also occurs).. In terms of biological role, cleaves peptides in various proteins in a process that requires ATP hydrolysis. Has a chymotrypsin-like activity. Plays a major role in the degradation of misfolded proteins. This is ATP-dependent Clp protease proteolytic subunit from Moorella thermoacetica (strain ATCC 39073 / JCM 9320).